A 127-amino-acid polypeptide reads, in one-letter code: Nuclear transport factor 2 (127 aa).

The residue at position 4 (K4) is an N6-acetyllysine. In terms of domain architecture, NTF2 spans 10 to 121 (IGSSFIQHYY…WVCTNDMFRL (112 aa)).

As to quaternary structure, homodimer. Interacts with RAN (GDP-bound form); the interaction is direct and regulates RAN nuclear import. Interacts with the nucleoporins NUP54, NUP58 and NUP62 (via FG repeats); recruits NUTF2 to the nuclear pore complex a step required for NUTF2-mediated GDP-bound RAN nuclear import. Interacts with CAPG; mediates its nuclear import.

The protein localises to the cytoplasm. The protein resides in the cytosol. It is found in the nucleus outer membrane. It localises to the nucleus. Its subcellular location is the nuclear pore complex. The protein localises to the nucleus inner membrane. The protein resides in the nucleoplasm. Functionally, mediates the import of GDP-bound RAN from the cytoplasm into the nucleus which is essential for the function of RAN in cargo receptor-mediated nucleocytoplasmic transport. Thereby, plays indirectly a more general role in cargo receptor-mediated nucleocytoplasmic transport. Interacts with GDP-bound RAN in the cytosol, recruits it to the nuclear pore complex via its interaction with nucleoporins and promotes its nuclear import. This chain is Nuclear transport factor 2, found in Bos taurus (Bovine).